Here is a 91-residue protein sequence, read N- to C-terminus: Probable Fe(2+)-trafficking protein (91 aa).

The protein belongs to the Fe(2+)-trafficking protein family.

Functionally, could be a mediator in iron transactions between iron acquisition and iron-requiring processes, such as synthesis and/or repair of Fe-S clusters in biosynthetic enzymes. This chain is Probable Fe(2+)-trafficking protein, found in Shewanella amazonensis (strain ATCC BAA-1098 / SB2B).